The primary structure comprises 298 residues: Iron/alpha-ketoglutarate-dependent dioxygenase ausO (298 aa).

Positions 130, 132, and 211 each coordinate Fe cation.

This sequence belongs to the PhyH family. As to quaternary structure, homodimer. It depends on Fe cation as a cofactor.

The protein operates within secondary metabolite biosynthesis; terpenoid biosynthesis. Iron/alpha-ketoglutarate-dependent dioxygenase; part of the gene cluster that mediates the biosynthesis of calidodehydroaustin, a fungal meroterpenoid. The first step of the pathway is the synthesis of 3,5-dimethylorsellinic acid by the polyketide synthase ausA. 3,5-dimethylorsellinic acid is then prenylated by the polyprenyl transferase ausN. Further epoxidation by the FAD-dependent monooxygenase ausM and cyclization by the probable terpene cyclase ausL lead to the formation of protoaustinoid A. Protoaustinoid A is then oxidized to spiro-lactone preaustinoid A3 by the combined action of the FAD-binding monooxygenases ausB and ausC, and the dioxygenase ausE. Acid-catalyzed keto-rearrangement and ring contraction of the tetraketide portion of preaustinoid A3 by ausJ lead to the formation of preaustinoid A4. The aldo-keto reductase ausK, with the help of ausH, is involved in the next step by transforming preaustinoid A4 into isoaustinone which is in turn hydroxylated by the P450 monooxygenase ausI to form austinolide. The cytochrome P450 monooxygenase ausG modifies austinolide to austinol. Austinol is further acetylated to austin by the O-acetyltransferase ausP, which spontaneously changes to dehydroaustin. The cytochrome P450 monooxygenase ausR then converts dehydroaustin is into 7-dehydrodehydroaustin. The hydroxylation catalyzed by ausR permits the O-acetyltransferase ausQ to add an additional acetyl group to the molecule, leading to the formation of acetoxydehydroaustin. The short chain dehydrogenase ausT catalyzes the reduction of the double bond present between carbon atoms 1 and 2 to convert 7-dehydrodehydroaustin into 1,2-dihydro-7-hydroxydehydroaustin. AusQ catalyzes not only an acetylation reaction but also the addition of the PKS ausV diketide product to 1,2-dihydro-7-hydroxydehydroaustin, forming precalidodehydroaustin. Finally, the iron/alpha-ketoglutarate-dependent dioxygenase converts precalidodehydroaustin into calidodehydroaustin. The chain is Iron/alpha-ketoglutarate-dependent dioxygenase ausO from Aspergillus calidoustus.